A 199-amino-acid chain; its full sequence is Recombination protein RecR (199 aa).

The C4-type zinc finger occupies 56-71 (CRSCFNVAQSELCRIC). Residues 79–174 (SSICVVEEPK…KVTRLASGLP (96 aa)) enclose the Toprim domain.

The protein belongs to the RecR family.

Its function is as follows. May play a role in DNA repair. It seems to be involved in an RecBC-independent recombinational process of DNA repair. It may act with RecF and RecO. The sequence is that of Recombination protein RecR from Frankia casuarinae (strain DSM 45818 / CECT 9043 / HFP020203 / CcI3).